Reading from the N-terminus, the 434-residue chain is MSGLLIAAPASGSGKTTVTLGLMRALKRRGVAIAPGKAGPDYIDPAFHAAATGEPCFNYDPWAMRPELLLANASHVASGGRTLIVEAMMGLHDGAADGSGTPADLAATLNLAVILVVDCARMSQSVAALVRGYADHRDDIRVVGVILNKVGSDRHEMMLRDALGKVRMPVFGVLRQDSALQLPERHLGLVQAGEHSALEGFIEAAAARVEAACDLDAIRLIATIFPQVPAAADAERLRPLGQRIAVARDIAFAFCYEHLLYGWRQGGAEISFFSPLADEGPDAAADAVYLPGGYPELHAGQLSAAARFRSGMHSAAERGARIFGECGGYMVLGEGLVAADGTRYDMLGLLPLVTSFAERRRHLGYRRVVPVDNAFFDGPMTAHEFHYATIVAEGAADRLFAVSDAAGEDLGQAGLRRGPVAGSFMHLIDVAGAA.

A GATase cobBQ-type domain is found at 243–434 (RIAVARDIAF…MHLIDVAGAA (192 aa)). Residue Cys-326 is the Nucleophile of the active site.

It belongs to the CobB/CbiA family. As to quaternary structure, homodimer. Mg(2+) is required as a cofactor.

The enzyme catalyses hydrogenobyrinate + 2 L-glutamine + 2 ATP + 2 H2O = hydrogenobyrinate a,c-diamide + 2 L-glutamate + 2 ADP + 2 phosphate + 2 H(+). It participates in cofactor biosynthesis; adenosylcobalamin biosynthesis; cob(II)yrinate a,c-diamide from precorrin-2 (aerobic route): step 9/10. Catalyzes the ATP-dependent amidation of the two carboxylate groups at positions a and c of hydrogenobyrinate, using either L-glutamine or ammonia as the nitrogen source. To a much lesser extent, can also use cobyrinate as substrate in vitro, but the physiological substrate is indeed hydrogenobyrinate, as part of the aerobic pathway for cobalamin biosynthesis. This Sinorhizobium sp protein is Hydrogenobyrinate a,c-diamide synthase.